A 315-amino-acid chain; its full sequence is Ester hydrolase C11orf54 homolog (315 aa).

The Zn(2+) site is built by H266, H268, and H278.

In terms of assembly, monomer. The cofactor is Zn(2+).

The protein localises to the nucleus. The protein resides in the cytoplasm. In terms of biological role, exhibits ester hydrolase activity on the substrate p-nitrophenyl acetate, in vitro. Regulates DNA damage and repair by regulating HIF1A degradation via chaperone-mediated autophagy (CMA). The polypeptide is Ester hydrolase C11orf54 homolog (Mus musculus (Mouse)).